The primary structure comprises 233 residues: Large ribosomal subunit protein uL1 (233 aa).

This sequence belongs to the universal ribosomal protein uL1 family. Part of the 50S ribosomal subunit.

Its function is as follows. Binds directly to 23S rRNA. The L1 stalk is quite mobile in the ribosome, and is involved in E site tRNA release. In terms of biological role, protein L1 is also a translational repressor protein, it controls the translation of the L11 operon by binding to its mRNA. The sequence is that of Large ribosomal subunit protein uL1 from Finegoldia magna (strain ATCC 29328 / DSM 20472 / WAL 2508) (Peptostreptococcus magnus).